The chain runs to 87 residues: HssA/B-like protein 56 (87 aa).

The protein belongs to the hssA/B family.

The sequence is that of HssA/B-like protein 56 (hssl56) from Dictyostelium discoideum (Social amoeba).